We begin with the raw amino-acid sequence, 554 residues long: Undecaprenyl phosphate-alpha-4-amino-4-deoxy-L-arabinose arabinosyl transferase (554 aa).

The next 11 membrane-spanning stretches (helical) occupy residues 4-24 (LKDSGAALLALFFVLVYLLPV), 87-107 (FGSIFSTALSAVLVYWLATLL), 115-135 (VLATLIYLSFLLVFGIGTYAV), 178-198 (FMTKGFLALAVPVIAVLPIVI), 206-226 (LVVFGPIAIVCAVLLSLPWAL), 262-282 (YLPILCIGVLPWLGLLPGALF), 293-313 (ELFFLLSWVVMPLLFFSVAKG), 315-335 (LPTYILPCMAPLSLLMAAYAT), 351-371 (VINLLFGVACALVIVVIGLGL), 384-404 (QKVWLGVLAFAGWGVTGFITL), and 414-434 (AAACPLLFILLVGYLIPQQVV).

It belongs to the glycosyltransferase 83 family.

The protein localises to the cell inner membrane. It carries out the reaction 4-amino-4-deoxy-alpha-L-arabinopyranosyl di-trans,octa-cis-undecaprenyl phosphate + lipid IVA = lipid IIA + di-trans,octa-cis-undecaprenyl phosphate.. It functions in the pathway lipopolysaccharide metabolism; 4-amino-4-deoxy-beta-L-arabinose-lipid A biosynthesis. In terms of biological role, catalyzes the transfer of the L-Ara4N moiety of the glycolipid undecaprenyl phosphate-alpha-L-Ara4N to lipid A. The modified arabinose is attached to lipid A and is required for resistance to polymyxin and cationic antimicrobial peptides. This Yersinia pseudotuberculosis serotype O:1b (strain IP 31758) protein is Undecaprenyl phosphate-alpha-4-amino-4-deoxy-L-arabinose arabinosyl transferase.